The chain runs to 810 residues: Lon protease (810 aa).

In terms of domain architecture, Lon N-terminal spans 8–201 (LPLLPLRGIL…KLCGIVAKEL (194 aa)). An ATP-binding site is contributed by 353 to 360 (GPPGVGKT). A Lon proteolytic domain is found at 589–770 (NDEVGTVTGM…DQVLAIALLE (182 aa)). Residues Ser-676 and Lys-719 contribute to the active site.

This sequence belongs to the peptidase S16 family. As to quaternary structure, homohexamer. Organized in a ring with a central cavity.

It is found in the cytoplasm. It carries out the reaction Hydrolysis of proteins in presence of ATP.. ATP-dependent serine protease that mediates the selective degradation of mutant and abnormal proteins as well as certain short-lived regulatory proteins. Required for cellular homeostasis and for survival from DNA damage and developmental changes induced by stress. Degrades polypeptides processively to yield small peptide fragments that are 5 to 10 amino acids long. Binds to DNA in a double-stranded, site-specific manner. This chain is Lon protease, found in Desulforamulus reducens (strain ATCC BAA-1160 / DSM 100696 / MI-1) (Desulfotomaculum reducens).